We begin with the raw amino-acid sequence, 140 residues long: Cystatin-C (140 aa).

Residues 1–20 (MASPLRSLMLLLAVLAVAWA) form the signal peptide. The short motif at 75–79 (QLVAG) is the Secondary area of contact element. 2 cysteine pairs are disulfide-bonded: Cys93/Cys103 and Cys117/Cys137. N-linked (GlcNAc...) asparagine glycosylation is present at Asn99.

It belongs to the cystatin family.

The protein resides in the secreted. In terms of biological role, as an inhibitor of cysteine proteinases, this protein is thought to serve an important physiological role as a local regulator of this enzyme activity. Known to inhibit cathepsin B, H, and L. In Rattus norvegicus (Rat), this protein is Cystatin-C (Cst3).